The primary structure comprises 474 residues: Tumor necrosis factor receptor superfamily member 1B (474 aa).

Positions 1-22 are cleaved as a signal peptide; that stretch reads MAPAALWVALVFELQLWATGHT. Topologically, residues 23–258 are extracellular; sequence VPAQVVLTPY…PIIEQSTKGG (236 aa). The O-linked (GalNAc...) threonine glycan is linked to T30. TNFR-Cys repeat units follow at residues 39 to 77, 78 to 119, 120 to 164, and 165 to 203; these read ECQI…TVCA, DCEA…NRVC, ACEA…VLCK, and ACAP…AVCA. Disulfide bonds link C40–C54, C55–C68, C58–C76, C79–C94, C97–C111, C101–C119, C121–C127, C136–C145, C139–C163, and C166–C181. Residue N69 is glycosylated (N-linked (GlcNAc...) asparagine). N-linked (GlcNAc...) asparagine glycosylation occurs at N195. 2 O-linked (GalNAc...) threonine glycosylation sites follow: T208 and T224. Residues 220 to 243 are disordered; that stretch reads QPEPTRSQPLDQEPGPSQTPSILT. Residues 259 to 288 form a helical membrane-spanning segment; the sequence is ISLPIGLIVGVTSLGLLMLGLVNCIILVQR. Topologically, residues 289–474 are cytoplasmic; sequence KKKPSCLQRD…WFDQIAVKVA (186 aa). Disordered stretches follow at residues 295–314, 321–378, and 397–463; these read LQRD…DAVG, LTTA…GSHG, and SQCS…PSQA. Residues 297-310 are compositionally biased toward basic and acidic residues; it reads RDAKVPHVPDEKSQ. 2 stretches are compositionally biased toward low complexity: residues 324–338 and 363–378; these read APSS…SASA and ARAS…GSHG. Phosphoserine is present on S331. Over residues 429–442 the composition is skewed to polar residues; that stretch reads ECPSQSPCETTETL.

In terms of assembly, binds to TRAF2. Interacts with BMX. Interacts (activated form) with XPNPEP3.

It is found in the membrane. Its function is as follows. Receptor with high affinity for TNFSF2/TNF-alpha and approximately 5-fold lower affinity for homotrimeric TNFSF1/lymphotoxin-alpha. The TRAF1/TRAF2 complex recruits the apoptotic suppressors BIRC2 and BIRC3 to TNFRSF1B/TNFR2. This chain is Tumor necrosis factor receptor superfamily member 1B (Tnfrsf1b), found in Mus musculus (Mouse).